Reading from the N-terminus, the 364-residue chain is Long-wave-sensitive opsin 1 (364 aa).

The Extracellular segment spans residues 1–52 (MAHAWGPQRLAGGQPQANFEESTQGSIFTYTNSNSTRDPFEGPNYHIAPRWV). Ser-22 carries O-linked (GlcNAc) serine glycosylation. N-linked (GlcNAc...) asparagine glycosylation is present at Asn-34. The chain crosses the membrane as a helical span at residues 53–77 (YHLTSAWMVFVVIASVFTNGLVLAA). The Cytoplasmic portion of the chain corresponds to 78 to 89 (TMRFKKLRHPLN). A helical transmembrane segment spans residues 90-115 (WILVNLAIADLAETIIASTISVVNQM). The Extracellular portion of the chain corresponds to 116-129 (YGYFVLGHPLCVVE). Cys-126 and Cys-203 form a disulfide bridge. The chain crosses the membrane as a helical span at residues 130–149 (GYTVSLCGITGLWSLAIISW). Over 150–168 (ERWMVVCKPFGNVRFDAKL) the chain is Cytoplasmic. Residues 169-192 (AITGIAFSWIWAAVWTAPPIFGWS) traverse the membrane as a helical segment. Topologically, residues 193 to 218 (RYWPHGLKTSCGPDVFSGSSYPGVQS) are extracellular. The chain crosses the membrane as a helical span at residues 219–246 (YMIVLMITCCFIPLSVIILCYLQVWLAI). At 247–268 (RAVAKQQKESESTQKAEKEVTR) the chain is on the cytoplasmic side. A helical membrane pass occupies residues 269–292 (MVMVMIFAYCLCWGPYTFFACFAA). Residues 293 to 300 (AHPGYAFH) are Extracellular-facing. A helical membrane pass occupies residues 301–325 (PLVAALPAYFAKSATIYNPIIYVFM). Lys-312 bears the N6-(retinylidene)lysine mark. The Cytoplasmic segment spans residues 326–364 (NRQFRNCILQLFGKKVDDSSELSSVSKTEASSVSSVSPA).

This sequence belongs to the G-protein coupled receptor 1 family. Opsin subfamily. Post-translationally, phosphorylated on some or all of the serine and threonine residues present in the C-terminal region. In terms of tissue distribution, expressed in retina (at protein level). Expressed in cone and/or rod photoreceptor cells (at protein level).

The protein resides in the membrane. Its function is as follows. Visual pigments are the light-absorbing molecules that mediate vision. They consist of an apoprotein, opsin, covalently linked to cis-retinal. The protein is Long-wave-sensitive opsin 1 (OPN1LW) of Bos taurus (Bovine).